A 368-amino-acid chain; its full sequence is Quinolinate synthase (368 aa).

Iminosuccinate-binding residues include histidine 46 and serine 63. Cysteine 110 contacts [4Fe-4S] cluster. Iminosuccinate contacts are provided by residues tyrosine 141–asparagine 143 and serine 162. Cysteine 230 contacts [4Fe-4S] cluster. Iminosuccinate contacts are provided by residues histidine 256–glutamate 258 and threonine 273. Residue cysteine 320 participates in [4Fe-4S] cluster binding.

This sequence belongs to the quinolinate synthase family. Type 3 subfamily. [4Fe-4S] cluster is required as a cofactor.

Its subcellular location is the cytoplasm. It carries out the reaction iminosuccinate + dihydroxyacetone phosphate = quinolinate + phosphate + 2 H2O + H(+). It functions in the pathway cofactor biosynthesis; NAD(+) biosynthesis; quinolinate from iminoaspartate: step 1/1. Its function is as follows. Catalyzes the condensation of iminoaspartate with dihydroxyacetone phosphate to form quinolinate. This Bacillus cereus (strain ATCC 14579 / DSM 31 / CCUG 7414 / JCM 2152 / NBRC 15305 / NCIMB 9373 / NCTC 2599 / NRRL B-3711) protein is Quinolinate synthase.